Reading from the N-terminus, the 305-residue chain is Acyl transferase (305 aa).

Residues S114, D211, and H241 each act as charge relay system in the active site.

It belongs to the LuxD family.

The protein operates within lipid metabolism; fatty acid reduction for biolumincescence. In terms of biological role, acyl transferase is part of the fatty acid reductase system required for aldehyde biosynthesis; it produces fatty acids for the luminescent reaction. The protein is Acyl transferase (luxD) of Vibrio harveyi (Beneckea harveyi).